The following is a 132-amino-acid chain: UPF0102 protein Acid_2433 (132 aa).

Belongs to the UPF0102 family.

This chain is UPF0102 protein Acid_2433, found in Solibacter usitatus (strain Ellin6076).